The sequence spans 438 residues: Chromosomal replication initiator protein DnaA (438 aa).

The interval 1–71 (MTTKEFLTII…CFEIYDGSKP (71 aa)) is domain I, interacts with DnaA modulators. The interval 71–100 (PTIEIKLSNEKKSKKEILKEQTQNESTEST) is domain II. The interval 101-315 (ILNPSYTFDS…GVLIRINASA (215 aa)) is domain III, AAA+ region. Residues Gly145, Gly147, Lys148, and Thr149 each contribute to the ATP site. The tract at residues 316–438 (SLLNQEITLP…LKNKIINSRE (123 aa)) is domain IV, binds dsDNA.

The protein belongs to the DnaA family. As to quaternary structure, oligomerizes as a right-handed, spiral filament on DNA at oriC.

It localises to the cytoplasm. Functionally, plays an essential role in the initiation and regulation of chromosomal replication. ATP-DnaA binds to the origin of replication (oriC) to initiate formation of the DNA replication initiation complex once per cell cycle. Binds the DnaA box (a 9 base pair repeat at the origin) and separates the double-stranded (ds)DNA. Forms a right-handed helical filament on oriC DNA; dsDNA binds to the exterior of the filament while single-stranded (ss)DNA is stabiized in the filament's interior. The ATP-DnaA-oriC complex binds and stabilizes one strand of the AT-rich DNA unwinding element (DUE), permitting loading of DNA polymerase. After initiation quickly degrades to an ADP-DnaA complex that is not apt for DNA replication. Binds acidic phospholipids. This chain is Chromosomal replication initiator protein DnaA, found in Aliarcobacter butzleri (strain RM4018) (Arcobacter butzleri).